A 451-amino-acid polypeptide reads, in one-letter code: DNA double-strand break repair protein Mre11 (451 aa).

Aspartate 8, histidine 10, aspartate 49, and asparagine 84 together coordinate Mn(2+). Residue histidine 85 is the Proton donor of the active site. Positions 168, 198, and 200 each coordinate Mn(2+). Residues 374–451 form a disordered region; that stretch reads REDNPPDLGD…GRPSLDRWIG (78 aa). Acidic residues predominate over residues 396-416; sequence GSEESSEEPEESDGEEVGLEV.

It belongs to the MRE11/RAD32 family. As to quaternary structure, homodimer. Forms a heterotetramer composed of two Mre11 subunits and two Rad50 subunits. The cofactor is Mn(2+).

With respect to regulation, nuclease activity is regulated by Rad50. Part of the Rad50/Mre11 complex, which is involved in the early steps of DNA double-strand break (DSB) repair. The complex may facilitate opening of the processed DNA ends to aid in the recruitment of HerA and NurA. Mre11 binds to DSB ends and has both double-stranded 3'-5' exonuclease activity and single-stranded endonuclease activity. This is DNA double-strand break repair protein Mre11 from Methanopyrus kandleri (strain AV19 / DSM 6324 / JCM 9639 / NBRC 100938).